Consider the following 549-residue polypeptide: Cobalt-dependent inorganic pyrophosphatase (549 aa).

2 CBS domains span residues glutamate 74–serine 130 and methionine 252–valine 310. Residues lysine 100, serine 116 to asparagine 119, threonine 253, valine 258, and tyrosine 278 to asparagine 280 contribute to the AMP site.

This sequence belongs to the PPase family. Homodimer. It depends on Co(2+) as a cofactor. The cofactor is Mn(2+). Mg(2+) is required as a cofactor.

It carries out the reaction diphosphate + H2O = 2 phosphate + H(+). Its activity is regulated as follows. Inhibited by AMP and ADP with 25% and 35% of activity remaining, respectively, at saturating conditions. Activated 5-fold by diadenosine polyphosphates(Ap[n]A) with n&gt;2 (Ap3A, Ap4A, Ap5A, Ap6A) at saturating conditions. The sequence is that of Cobalt-dependent inorganic pyrophosphatase from Clostridium perfringens (strain 13 / Type A).